Here is a 491-residue protein sequence, read N- to C-terminus: Cobyric acid synthase (491 aa).

Positions 251 to 444 (GITIAVIRLP…LHGLFTNDEF (194 aa)) constitute a GATase cobBQ-type domain. Cysteine 329 functions as the Nucleophile in the catalytic mechanism. The active site involves histidine 436.

The protein belongs to the CobB/CobQ family. CobQ subfamily.

Its pathway is cofactor biosynthesis; adenosylcobalamin biosynthesis. Its function is as follows. Catalyzes amidations at positions B, D, E, and G on adenosylcobyrinic A,C-diamide. NH(2) groups are provided by glutamine, and one molecule of ATP is hydrogenolyzed for each amidation. In Chloroflexus aggregans (strain MD-66 / DSM 9485), this protein is Cobyric acid synthase.